A 213-amino-acid polypeptide reads, in one-letter code: MSPSTTTIFIGPILAVDAAVSHAIHTAAKPFLPPFVLLLLEISADFRFSFPVSLSFLLSPPLRSFLVPFLLGLLFDLIFVGIVKLIFRRARPAYNHPSMSAAVSADHYSFPSGHASRVFFVAASVHFFSAAAEASMTGPSYSFLDGWIRDHNDGDVKVEVVVVVWIWATVTAISRILLGRHYVLDVAAGAFLGIVEALFALRFLRFDEMIFGR.

5 consecutive transmembrane segments (helical) span residues 30–50 (PFLP…RFSF), 67–87 (VPFL…KLIF), 118–138 (VFFV…SMTG), 158–178 (VEVV…RILL), and 181–201 (HYVL…LFAL).

It belongs to the PA-phosphatase related phosphoesterase family.

The protein localises to the membrane. In Arabidopsis thaliana (Mouse-ear cress), this protein is Probable lipid phosphate phosphatase beta (LPPB).